A 101-amino-acid chain; its full sequence is NAD(P)H-quinone oxidoreductase subunit 4L, chloroplastic (101 aa).

3 consecutive transmembrane segments (helical) span residues 2–22, 32–52, and 61–81; these read MFEH…YGLI, MCLE…SDLF, and IFSI…LAIV.

Belongs to the complex I subunit 4L family. In terms of assembly, NDH is composed of at least 16 different subunits, 5 of which are encoded in the nucleus.

The protein localises to the plastid. It is found in the chloroplast thylakoid membrane. The enzyme catalyses a plastoquinone + NADH + (n+1) H(+)(in) = a plastoquinol + NAD(+) + n H(+)(out). It catalyses the reaction a plastoquinone + NADPH + (n+1) H(+)(in) = a plastoquinol + NADP(+) + n H(+)(out). Functionally, NDH shuttles electrons from NAD(P)H:plastoquinone, via FMN and iron-sulfur (Fe-S) centers, to quinones in the photosynthetic chain and possibly in a chloroplast respiratory chain. The immediate electron acceptor for the enzyme in this species is believed to be plastoquinone. Couples the redox reaction to proton translocation, and thus conserves the redox energy in a proton gradient. This chain is NAD(P)H-quinone oxidoreductase subunit 4L, chloroplastic, found in Lemna minor (Common duckweed).